We begin with the raw amino-acid sequence, 58 residues long: Large ribosomal subunit protein bL32c (58 aa).

This sequence belongs to the bacterial ribosomal protein bL32 family.

It is found in the plastid. The protein resides in the chloroplast. This chain is Large ribosomal subunit protein bL32c (rpl32), found in Adiantum capillus-veneris (Maidenhair fern).